Reading from the N-terminus, the 375-residue chain is Negative elongation factor E (375 aa).

A coiled-coil region spans residues 7 to 36 (GLSEEEEALQKKFNKLKKKKKALLALKKQS). Positions 30-58 (LALKKQSSSGPASQGGVKRSLSEQPVVDT) are disordered. The residue at position 51 (serine 51) is a Phosphoserine. A Glycyl lysine isopeptide (Lys-Gly) (interchain with G-Cter in SUMO1); alternate cross-link involves residue lysine 78. Lysine 78 is covalently cross-linked (Glycyl lysine isopeptide (Lys-Gly) (interchain with G-Cter in SUMO2); alternate). Positions 79–262 (AETKNSGFKR…SDSFPERRAP (184 aa)) are disordered. Lysine 82 participates in a covalent cross-link: Glycyl lysine isopeptide (Lys-Gly) (interchain with G-Cter in SUMO2). The span at 90–101 (RTLEGKLKDPEK) shows a compositional bias: basic and acidic residues. Phosphoserine is present on residues serine 113 and serine 115. At glutamate 122 the chain carries PolyADP-ribosyl glutamic acid. Residues serine 131 and serine 139 each carry the phosphoserine modification. Glutamate 151 bears the PolyADP-ribosyl glutamic acid mark. Residues 155–167 (APGAGDGPPRGFD) are compositionally biased toward low complexity. Position 172 is a polyADP-ribosyl glutamic acid (glutamate 172). Phosphoserine is present on residues serine 179, serine 181, serine 185, and serine 187. Repeat copies occupy residues 184–185 (RS), 186–187 (RS), 188–189 (RD), and 190–191 (RS). The 32 X 2 AA approximate tandem repeats of R-[DSE] stretch occupies residues 184-247 (RSRSRDRSHD…RDRDRERDRE (64 aa)). Residues 186–260 (RSRDRSHDRS…RRSDSFPERR (75 aa)) show a composition bias toward basic and acidic residues. Position 191 is a phosphoserine (serine 191). The stretch at 192-193 (HD) is one 5; approximate repeat. A run of 4 repeats spans residues 194–195 (RS), 196–197 (RD), 198–199 (RD), and 200–201 (RD). Residues 202–203 (KE) form a 10; approximate repeat. Tandem repeats lie at residues 204 to 205 (RD), 206 to 207 (RD), 208 to 209 (RD), 210 to 211 (RD), 212 to 213 (RD), 214 to 215 (RD), and 216 to 217 (RD). The 18; approximate repeat unit spans residues 218-219 (KD). The 19; approximate repeat unit spans residues 220–221 (KD). Tandem repeats lie at residues 222–223 (RD), 224–225 (RD), 226–227 (RD), and 228–229 (RD). The 24; approximate repeat unit spans residues 230–231 (KE). Repeat copies occupy residues 232–233 (RD), 234–235 (RD), 236–237 (RD), 238–239 (RD), 240–241 (RD), 242–243 (RE), 244–245 (RD), and 246–247 (RE). 2 positions are modified to phosphoserine: serine 253 and serine 255. One can recognise an RRM domain in the interval 266–336 (NTLYVYGEDM…VQLKVNIARK (71 aa)). Residues threonine 276 and threonine 278 each carry the phosphothreonine modification. Residues serine 285 and serine 357 each carry the phosphoserine modification.

Belongs to the RRM NELF-E family. The NELF complex is composed of NELFA, NELFB, NELFCD and NELFE. Interacts with NELFB. In terms of processing, phosphorylated by the P-TEFb complex at sites next to its RNA recognition motif, promoting its release from chromatin. Sumoylated. Post-translationally, poly-ADP-ribosylated by PARP1, thereby preventing RNA-binding and relieving transcription pausing.

It is found in the nucleus. The protein resides in the chromosome. Its function is as follows. Essential component of the NELF complex, a complex that negatively regulates the elongation of transcription by RNA polymerase II. The NELF complex, which acts via an association with the DSIF complex and causes transcriptional pausing, is counteracted by the P-TEFb kinase complex. Provides the strongest RNA binding activity of the NELF complex and may initially recruit the NELF complex to RNA. The chain is Negative elongation factor E (Nelfe) from Mus musculus (Mouse).